The following is an 850-amino-acid chain: Mitogen-activated protein kinase kinase kinase 11 (850 aa).

Ser-11 is subject to Phosphoserine. The span at 18-31 shows a compositional bias: gly residues; the sequence is GSGSGGGGGSGGVR. Residues 18-37 form a disordered region; sequence GSGSGGGGGSGGVRPEGSPK. Ser-35 is subject to Phosphoserine. Residues 42–106 form the SH3 domain; sequence YANPVWTALF…PSNYVSRGGG (65 aa). Residues 118–380 form the Protein kinase domain; sequence LRLEEVIGIG…ASILQQLEAL (263 aa). ATP is bound by residues 124-132 and Lys-145; that span reads IGIGGFGKV. The active-site Proton acceptor is Asp-242. Residue Thr-278 is modified to Phosphothreonine; by autocatalysis. Position 282 is a phosphoserine; by autocatalysis and MAP4K1 (Ser-282). Ser-395 is modified (phosphoserine). Leucine-zipper regions lie at residues 404–425 and 439–460; these read IQGLFDELRAKEKELLSREEEL and LRRREHLLAQWELEVFERELTL. A phosphoserine mark is found at Ser-508, Ser-525, Ser-549, Ser-556, and Ser-557. The tract at residues 536–850 is disordered; sequence LEPAESGQTW…QAPWAPEAGP (315 aa). Over residues 551-563 the composition is skewed to basic and acidic residues; that stretch reads RRLDDSSNGERRA. A compositionally biased stretch (low complexity) spans 598–610; the sequence is SSPLGSPSTPPAL. Ser-655 is modified (phosphoserine). The span at 677–693 shows a compositional bias: pro residues; it reads TAPPPAQMASPCPPDLP. Thr-712 is subject to Phosphothreonine. 9 positions are modified to phosphoserine: Ser-728, Ser-731, Ser-743, Ser-751, Ser-761, Ser-773, Ser-792, Ser-796, and Ser-818. Positions 790–802 are enriched in pro residues; sequence RPSPLPSPQPAPR. Low complexity predominate over residues 803-819; the sequence is RAPWTLFPDSDPFWDSP.

Belongs to the protein kinase superfamily. STE Ser/Thr protein kinase family. MAP kinase kinase kinase subfamily. As to quaternary structure, homodimer; undergoes dimerization during activation. Interacts with MAP2K4/MKK4. Interacts with MAP2K7/MKK7. Found in a complex with SH3RF1, RAC1, MAP2K7/MKK7, MAPK8IP1/JIP1 and MAPK8/JNK1. Mg(2+) is required as a cofactor. Post-translationally, autophosphorylation on serine and threonine residues within the activation loop plays a role in enzyme activation. Thr-278 is likely to be the main autophosphorylation site. Phosphorylation of Ser-556 and Ser-557 is induced by CDC42.

The protein localises to the cytoplasm. It is found in the cytoskeleton. The protein resides in the microtubule organizing center. It localises to the centrosome. It carries out the reaction L-seryl-[protein] + ATP = O-phospho-L-seryl-[protein] + ADP + H(+). It catalyses the reaction L-threonyl-[protein] + ATP = O-phospho-L-threonyl-[protein] + ADP + H(+). Its activity is regulated as follows. Homodimerization via the leucine zipper domains is required for autophosphorylation and subsequent activation. Functionally, activates the JUN N-terminal pathway. Required for serum-stimulated cell proliferation and for mitogen and cytokine activation of MAPK14 (p38), MAPK3 (ERK) and MAPK8 (JNK1) through phosphorylation and activation of MAP2K4/MKK4 and MAP2K7/MKK7. Plays a role in mitogen-stimulated phosphorylation and activation of BRAF, but does not phosphorylate BRAF directly. Influences microtubule organization during the cell cycle. The protein is Mitogen-activated protein kinase kinase kinase 11 (Map3k11) of Rattus norvegicus (Rat).